Consider the following 518-residue polypeptide: Glutamate--cysteine ligase (518 aa).

This sequence belongs to the glutamate--cysteine ligase type 1 family. Type 1 subfamily.

It carries out the reaction L-cysteine + L-glutamate + ATP = gamma-L-glutamyl-L-cysteine + ADP + phosphate + H(+). The protein operates within sulfur metabolism; glutathione biosynthesis; glutathione from L-cysteine and L-glutamate: step 1/2. This is Glutamate--cysteine ligase from Salmonella arizonae (strain ATCC BAA-731 / CDC346-86 / RSK2980).